A 324-amino-acid chain; its full sequence is MLFTEEQLKLYSKPLSESEKEKCENAIRIIQESLESLGYETKKGIHRNNEDTLSYQIKMTNPSKDYELSIFVKGSYATNTNVRQNSDVDIAVVKESEFFDKYREGKTRENYKFVSSNKPPYHFKDEVEEALIERFGRSEVRRGNKAIRINGNTYRKETDCVPCFRYRDYSNDYMDDPNNFIGGITIYSDKGERIINYPEQHINNSVIKNNNTNYKYKKMVRIIKEIRYQLIDSKNENAKQTSSFGVEGLFWNIPDYKYSNDEMLGDTFNALIAFLIDNIDKLREFKEPNDILNLCDSQEKNNVYKNFILDVKNYFEYSGEKKYE.

Mg(2+) is bound by residues D87 and D89. Residues D89, 144–145 (NK), and D159 contribute to the ATP site. D159 is a binding site for Mg(2+). GTP-binding residues include K224 and S243.

This sequence belongs to the CD-NTase family. E03 subfamily. Mg(2+) serves as cofactor.

It carries out the reaction GTP + ATP = 3',2'-cGAMP + 2 diphosphate. With respect to regulation, activated by a virus-derived, approximately 400 nucleotide RNA (called CBASS-activating bacteriophage RNA, cabRNA) that begins in the viral terminase subunit terS and extends into terL. RNA secondary and/or tertiary structure, as well as viral infection itself, are important for CdnE activation. A much longer RNA (escaper RNA) with a different secondary structure, derived from a terS-mutated virus still binds to this protein, but does not activate its nucleotide cyclase activity. Shorter viral-derived RNAs (34 and 49 nt) with extensive predicted secondary structure also activate the enzyme, although not as well as full-length cabRNA. Cyclic nucleotide synthase (second messenger synthase) of a CBASS antivirus system. CBASS (cyclic oligonucleotide-based antiphage signaling system) provides immunity against bacteriophage. The CD-NTase protein synthesizes cyclic nucleotides in response to infection; these serve as specific second messenger signals. The signals activate a diverse range of effectors, leading to bacterial cell death and thus abortive phage infection. The effector for this system is downstream Cap15. A type I-B CBASS system. In terms of biological role, cyclic dinucleotide synthase that catalyzes the synthesis of 3',2'-cyclic GMP-AMP (cGAMP) from GTP and ATP upon activation by viral-derived cabRNA. Binds cabRNA via positive charges in its N-terminus. Functionally, protects S.aureus against phage infection. When the CBASS operon (cdnE-cap15) is introduced in S.aureus strain RN4220 there is strong protection against lytic DNA phages 80alpha-vir and phi-NM1-gamma-6 but little to no protection against phages phi-NM4-gamma-4 or phi-12-gamma-3. The polypeptide is Cyclic GMP-AMP synthase CdnE03 (Staphylococcus schleiferi).